Consider the following 127-residue polypeptide: Aspartate 1-decarboxylase (127 aa).

Ser-25 serves as the catalytic Schiff-base intermediate with substrate; via pyruvic acid. At Ser-25 the chain carries Pyruvic acid (Ser). Residue Thr-57 participates in substrate binding. Tyr-58 serves as the catalytic Proton donor. Position 73–75 (73–75) interacts with substrate; sequence GAA.

Belongs to the PanD family. Heterooctamer of four alpha and four beta subunits. Requires pyruvate as cofactor. Post-translationally, is synthesized initially as an inactive proenzyme, which is activated by self-cleavage at a specific serine bond to produce a beta-subunit with a hydroxyl group at its C-terminus and an alpha-subunit with a pyruvoyl group at its N-terminus.

Its subcellular location is the cytoplasm. The enzyme catalyses L-aspartate + H(+) = beta-alanine + CO2. It participates in cofactor biosynthesis; (R)-pantothenate biosynthesis; beta-alanine from L-aspartate: step 1/1. Its function is as follows. Catalyzes the pyruvoyl-dependent decarboxylation of aspartate to produce beta-alanine. This Listeria monocytogenes serotype 4b (strain CLIP80459) protein is Aspartate 1-decarboxylase.